The following is a 357-amino-acid chain: Uroporphyrinogen decarboxylase (357 aa).

Residues 27-31 (RQAGR), Asp77, Tyr154, Ser209, and His330 contribute to the substrate site.

The protein belongs to the uroporphyrinogen decarboxylase family. As to quaternary structure, homodimer.

The protein localises to the cytoplasm. The enzyme catalyses uroporphyrinogen III + 4 H(+) = coproporphyrinogen III + 4 CO2. The protein operates within porphyrin-containing compound metabolism; protoporphyrin-IX biosynthesis; coproporphyrinogen-III from 5-aminolevulinate: step 4/4. Its function is as follows. Catalyzes the decarboxylation of four acetate groups of uroporphyrinogen-III to yield coproporphyrinogen-III. In Acinetobacter baumannii (strain ATCC 17978 / DSM 105126 / CIP 53.77 / LMG 1025 / NCDC KC755 / 5377), this protein is Uroporphyrinogen decarboxylase.